We begin with the raw amino-acid sequence, 395 residues long: NAD(P)H-quinone oxidoreductase subunit H (395 aa).

This sequence belongs to the complex I 49 kDa subunit family. In terms of assembly, NDH-1 can be composed of about 15 different subunits; different subcomplexes with different compositions have been identified which probably have different functions.

It is found in the cellular thylakoid membrane. It carries out the reaction a plastoquinone + NADH + (n+1) H(+)(in) = a plastoquinol + NAD(+) + n H(+)(out). It catalyses the reaction a plastoquinone + NADPH + (n+1) H(+)(in) = a plastoquinol + NADP(+) + n H(+)(out). Its function is as follows. NDH-1 shuttles electrons from an unknown electron donor, via FMN and iron-sulfur (Fe-S) centers, to quinones in the respiratory and/or the photosynthetic chain. The immediate electron acceptor for the enzyme in this species is believed to be plastoquinone. Couples the redox reaction to proton translocation, and thus conserves the redox energy in a proton gradient. Cyanobacterial NDH-1 also plays a role in inorganic carbon-concentration. The polypeptide is NAD(P)H-quinone oxidoreductase subunit H (Prochlorococcus marinus subsp. pastoris (strain CCMP1986 / NIES-2087 / MED4)).